The sequence spans 82 residues: MGIFDWKHWIVILIVVVLVFGTKRLKNLGSDVGEAIKGFRKAVNTEEDDKKEQPAAQPAQPLNQPHTIDAQAQKVEEPARKD.

A helical transmembrane segment spans residues 1–21 (MGIFDWKHWIVILIVVVLVFG). The interval 43 to 82 (VNTEEDDKKEQPAAQPAQPLNQPHTIDAQAQKVEEPARKD) is disordered.

It belongs to the TatA/E family. As to quaternary structure, the Tat system comprises two distinct complexes: a TatABC complex, containing multiple copies of TatA, TatB and TatC subunits, and a separate TatA complex, containing only TatA subunits. Substrates initially bind to the TatABC complex, which probably triggers association of the separate TatA complex to form the active translocon.

It localises to the cell inner membrane. Functionally, part of the twin-arginine translocation (Tat) system that transports large folded proteins containing a characteristic twin-arginine motif in their signal peptide across membranes. TatA could form the protein-conducting channel of the Tat system. This Pseudomonas paraeruginosa (strain DSM 24068 / PA7) (Pseudomonas aeruginosa (strain PA7)) protein is Sec-independent protein translocase protein TatA.